The sequence spans 284 residues: Exported repetitive protein (284 aa).

A signal peptide spans Met-1–Ala-22. At Ser-23–Asn-252 the chain is on the extracellular side. A disordered region spans residues Thr-80–Gly-216. Residues Ser-86–Thr-110 are compositionally biased toward low complexity. 12 repeat units span residues Pro-92–Ser-96, Pro-97–Ser-101, Pro-102–Ser-106, Pro-107–Asp-111, Pro-112–Ser-116, Pro-117–Pro-121, Pro-144–Asn-148, Pro-149–Ser-153, Pro-154–Thr-158, Pro-159–Ser-163, Pro-164–Asp-168, and Pro-169–Gly-173. A 6 X 5 AA tandem repeats of P-[GA]-L-T-S region spans residues Pro-92 to Pro-121. The 6 X 5 AA approximate tandem repeats of P-[ATG]-[LG]-X-X stretch occupies residues Pro-144–Gly-173. Residues Ala-145–Thr-165 are compositionally biased toward polar residues. Over residues Gly-202–Ser-212 the composition is skewed to low complexity. A helical membrane pass occupies residues Gly-253–Val-273. Over Pro-274–Ala-284 the chain is Cytoplasmic.

The protein to M.leprae 28 kDa antigen.

It is found in the cell membrane. Its function is as follows. Surface-exposed protein required for multiplication and intracellular growth. This chain is Exported repetitive protein (erp), found in Mycobacterium bovis (strain ATCC BAA-935 / AF2122/97).